The chain runs to 57 residues: Conotoxin Cal6.34 (57 aa).

The signal sequence occupies residues 1–22 (MKLTCVLIVAVLILTACQVIAA). Disulfide bonds link cysteine 26–cysteine 37, cysteine 29–cysteine 43, and cysteine 36–cysteine 54.

This sequence belongs to the conotoxin O1 superfamily. As to expression, expressed by the venom duct.

Its subcellular location is the secreted. Functionally, probable neurotoxin. The polypeptide is Conotoxin Cal6.34 (Californiconus californicus (California cone)).